The sequence spans 360 residues: Phenylalanine--tRNA ligase alpha subunit (360 aa).

Glu-260 is a binding site for Mg(2+).

Belongs to the class-II aminoacyl-tRNA synthetase family. Phe-tRNA synthetase alpha subunit type 1 subfamily. As to quaternary structure, tetramer of two alpha and two beta subunits. Mg(2+) serves as cofactor.

It is found in the cytoplasm. It catalyses the reaction tRNA(Phe) + L-phenylalanine + ATP = L-phenylalanyl-tRNA(Phe) + AMP + diphosphate + H(+). This chain is Phenylalanine--tRNA ligase alpha subunit, found in Agrobacterium fabrum (strain C58 / ATCC 33970) (Agrobacterium tumefaciens (strain C58)).